A 270-amino-acid polypeptide reads, in one-letter code: Elongation factor Ts (270 aa).

The interval 81–84 is involved in Mg(2+) ion dislocation from EF-Tu; it reads TDFV.

Belongs to the EF-Ts family.

The protein resides in the cytoplasm. Functionally, associates with the EF-Tu.GDP complex and induces the exchange of GDP to GTP. It remains bound to the aminoacyl-tRNA.EF-Tu.GTP complex up to the GTP hydrolysis stage on the ribosome. This Wigglesworthia glossinidia brevipalpis protein is Elongation factor Ts.